The following is a 193-amino-acid chain: V-type ATP synthase subunit E (193 aa).

It belongs to the V-ATPase E subunit family.

Its function is as follows. Produces ATP from ADP in the presence of a proton gradient across the membrane. In Anaeromyxobacter sp. (strain Fw109-5), this protein is V-type ATP synthase subunit E.